Reading from the N-terminus, the 331-residue chain is MAIELEDLGLSPDVADVMQRLARVGAGIARIISRNGLERDLGAGVGTNAGGDGQKALDVIADDAFRAALEGSAVAYYASEEQDEVVTLGEGSLALAIDPLDGSSNIDVNVSIGTIFSIFPAAAGPEASFLRPGTEQIAGGYIIYGPQCALVCSFGQGVQHWVLDLDAGIFRRMPDIRPLPAETSEFAINASNYRHWPQPIRAFVDDLVAGAEGPRGKNFNMRWIASLVAETHRILMRGGVFLYPGDERKGYERGRLRHVYECAPIAFLIANVGGGATDGCADILTALPDRLHARTPFVFGCASKVARVAAYHDLACEETSALFGSRGLFRS.

Mg(2+) contacts are provided by Glu-80, Asp-98, Leu-100, and Asp-101. Residues 101–104 (DGSS) and Asn-189 contribute to the substrate site. Residue Glu-261 coordinates Mg(2+).

The protein belongs to the FBPase class 1 family. As to quaternary structure, homotetramer. Requires Mg(2+) as cofactor.

Its subcellular location is the cytoplasm. The catalysed reaction is beta-D-fructose 1,6-bisphosphate + H2O = beta-D-fructose 6-phosphate + phosphate. It participates in carbohydrate biosynthesis; Calvin cycle. The chain is Fructose-1,6-bisphosphatase class 1 2 from Cereibacter sphaeroides (strain ATCC 17023 / DSM 158 / JCM 6121 / CCUG 31486 / LMG 2827 / NBRC 12203 / NCIMB 8253 / ATH 2.4.1.) (Rhodobacter sphaeroides).